We begin with the raw amino-acid sequence, 163 residues long: Cyanate hydratase (163 aa).

Active-site residues include Arg-103, Glu-106, and Ser-129.

Belongs to the cyanase family.

The enzyme catalyses cyanate + hydrogencarbonate + 3 H(+) = NH4(+) + 2 CO2. Catalyzes the reaction of cyanate with bicarbonate to produce ammonia and carbon dioxide. The polypeptide is Cyanate hydratase (Ajellomyces capsulatus (strain G186AR / H82 / ATCC MYA-2454 / RMSCC 2432) (Darling's disease fungus)).